The chain runs to 255 residues: Type III pantothenate kinase (255 aa).

Position 12–19 (12–19 (DIGNSYTK)) interacts with ATP. 109–112 (GDDL) is a substrate binding site. The active-site Proton acceptor is the Asp111. Thr133 provides a ligand contact to ATP. Thr185 serves as a coordination point for substrate.

Belongs to the type III pantothenate kinase family. Homodimer. The cofactor is NH4(+). K(+) is required as a cofactor.

The protein resides in the cytoplasm. The enzyme catalyses (R)-pantothenate + ATP = (R)-4'-phosphopantothenate + ADP + H(+). It participates in cofactor biosynthesis; coenzyme A biosynthesis; CoA from (R)-pantothenate: step 1/5. In terms of biological role, catalyzes the phosphorylation of pantothenate (Pan), the first step in CoA biosynthesis. The polypeptide is Type III pantothenate kinase (Malacoplasma penetrans (strain HF-2) (Mycoplasma penetrans)).